The chain runs to 66 residues: VRDAYIAQNYNCVYTCFKDAHCNDLCTKNGASSGYCQWAGKYGNACWCYALPDNVPIRIPGKCHRK.

One can recognise an LCN-type CS-alpha/beta domain in the interval Arg2 to His64. Intrachain disulfides connect Cys12–Cys63, Cys16–Cys36, Cys22–Cys46, and Cys26–Cys48.

It belongs to the long (4 C-C) scorpion toxin superfamily. Sodium channel inhibitor family. Alpha subfamily. Expressed by the venom gland.

It localises to the secreted. In terms of biological role, alpha toxins bind voltage-independently at site-3 of sodium channels (Nav) and inhibit the inactivation of the activated channels, thereby blocking neuronal transmission. The sequence is that of Toxin Boma6c from Buthus occitanus mardochei (Moroccan scorpion).